The chain runs to 470 residues: Choline/ethanolamine transporter flvcr2a (470 aa).

The Cytoplasmic portion of the chain corresponds to Met-1–Ser-23. A helical transmembrane segment spans residues Ser-24 to Gln-48. 3 residues coordinate choline: Asn-45, Ala-46, and Trp-49. At Trp-49–Ser-66 the chain is on the extracellular side. Residues Ser-67 to Arg-94 traverse the membrane as a helical segment. Over Lys-95–Gly-96 the chain is Cytoplasmic. Residues Leu-97–Val-116 traverse the membrane as a helical segment. Over Ala-117–Leu-123 the chain is Extracellular. Residues Phe-124–Trp-152 form a helical membrane-spanning segment. Residues Gln-138 and Leu-142 each coordinate choline. The Cytoplasmic segment spans residues Phe-153–Glu-157. Residues Val-158–Leu-183 traverse the membrane as a helical segment. Topologically, residues Val-184 to Glu-188 are extracellular. A helical membrane pass occupies residues Asp-189–Val-218. The Cytoplasmic segment spans residues Phe-219–Asn-254. A helical transmembrane segment spans residues Lys-255 to His-285. Tyr-272 contacts choline. Residues Tyr-286 to Glu-289 lie on the Extracellular side of the membrane. The chain crosses the membrane as a helical span at residues Glu-290–Thr-318. Residues Lys-319 to Thr-320 are Cytoplasmic-facing. The helical transmembrane segment at Tyr-321 to Leu-343 threads the bilayer. The Extracellular portion of the chain corresponds to Asn-344–Gly-346. A helical membrane pass occupies residues His-347–Leu-376. Residues Thr-377–Thr-384 are Cytoplasmic-facing. Residues Ser-385–His-410 form a helical membrane-spanning segment. Gln-394 is a binding site for choline. The Extracellular portion of the chain corresponds to Phe-411–Gly-412. Residues Thr-413 to Lys-435 traverse the membrane as a helical segment. At Ser-436–Met-470 the chain is on the cytoplasmic side. Residues Gln-445 to His-456 are compositionally biased toward polar residues. Residues Gln-445–Met-470 form a disordered region.

The protein belongs to the major facilitator superfamily. Feline leukemia virus subgroup C receptor (TC 2.A.1.28.1) family.

It is found in the cell membrane. It localises to the mitochondrion membrane. The protein localises to the endoplasmic reticulum membrane. The enzyme catalyses choline(out) = choline(in). It carries out the reaction ethanolamine(in) = ethanolamine(out). The catalysed reaction is heme b(in) = heme b(out). Functionally, choline uniporter that specifically mediates choline uptake at the blood-brain-barrier. Responsible for the majority of choline uptake across the blood-brain-barrier from the circulation into the brain. Choline, a nutrient critical for brain development, is a precursor of phosphatidylcholine, as well as betaine. Also mediates transport of ethanolamine. Choline and ethanolamine transport is not coupled with proton transport and is exclusively driven by the choline gradient across the plasma membrane. Also acts as a heme b transporter. In Danio rerio (Zebrafish), this protein is Choline/ethanolamine transporter flvcr2a.